Here is a 350-residue protein sequence, read N- to C-terminus: tRNA N6-adenosine threonylcarbamoyltransferase (350 aa).

Fe cation-binding residues include His109 and His113. Residues 136–140, Asp169, Gly182, Asp186, and Asn284 each bind substrate; that span reads TVSGG. Asp312 is a Fe cation binding site.

It belongs to the KAE1 / TsaD family. Requires Fe(2+) as cofactor.

The protein localises to the cytoplasm. It catalyses the reaction L-threonylcarbamoyladenylate + adenosine(37) in tRNA = N(6)-L-threonylcarbamoyladenosine(37) in tRNA + AMP + H(+). Functionally, required for the formation of a threonylcarbamoyl group on adenosine at position 37 (t(6)A37) in tRNAs that read codons beginning with adenine. Is involved in the transfer of the threonylcarbamoyl moiety of threonylcarbamoyl-AMP (TC-AMP) to the N6 group of A37, together with TsaE and TsaB. TsaD likely plays a direct catalytic role in this reaction. This chain is tRNA N6-adenosine threonylcarbamoyltransferase, found in Pelodictyon phaeoclathratiforme (strain DSM 5477 / BU-1).